A 359-amino-acid chain; its full sequence is Eukaryotic translation initiation factor 3 subunit H (359 aa).

The MPN domain occupies 13-160 (VQVEALVVMK…LRAFKLSPEF (148 aa)).

The protein belongs to the eIF-3 subunit H family. In terms of assembly, component of the eukaryotic translation initiation factor 3 (eIF-3) complex.

The protein resides in the cytoplasm. In terms of biological role, component of the eukaryotic translation initiation factor 3 (eIF-3) complex, which is involved in protein synthesis of a specialized repertoire of mRNAs and, together with other initiation factors, stimulates binding of mRNA and methionyl-tRNAi to the 40S ribosome. The eIF-3 complex specifically targets and initiates translation of a subset of mRNAs involved in cell proliferation. This Neurospora crassa (strain ATCC 24698 / 74-OR23-1A / CBS 708.71 / DSM 1257 / FGSC 987) protein is Eukaryotic translation initiation factor 3 subunit H (eif3h).